Consider the following 908-residue polypeptide: Probable disease resistance RPP8-like protein 4 (908 aa).

Positions 15–57 (DLLSRESERLQGIDEQLDGLKRQLRSLQSLLKDADAKKHGSDR) form a coiled coil. The NB-ARC domain maps to 146–459 (RQRVQREIRQ…AEGIYDGSTI (314 aa)). 192 to 199 (GMGGIGKT) lines the ATP pocket. LRR repeat units follow at residues 575–599 (LTLL…SIGG), 600–623 (LIHL…MRNL), and 842–867 (MPCL…KYIT).

It belongs to the disease resistance NB-LRR family. RPP8/HRT subfamily.

Its function is as follows. Potential disease resistance protein. In Arabidopsis thaliana (Mouse-ear cress), this protein is Probable disease resistance RPP8-like protein 4 (RPP8L4).